The primary structure comprises 325 residues: DNA repair and recombination protein RadA (325 aa).

Residue 107-114 coordinates ATP; it reads GEFGSGKT.

Belongs to the eukaryotic RecA-like protein family.

Its function is as follows. Involved in DNA repair and in homologous recombination. Binds and assemble on single-stranded DNA to form a nucleoprotein filament. Hydrolyzes ATP in a ssDNA-dependent manner and promotes DNA strand exchange between homologous DNA molecules. The sequence is that of DNA repair and recombination protein RadA from Methanococcoides burtonii (strain DSM 6242 / NBRC 107633 / OCM 468 / ACE-M).